Reading from the N-terminus, the 331-residue chain is Homoarginine-6-hydroxylase 2-ODD-C23 (331 aa).

The 108-residue stretch at 182–289 (PFWVMRLIGY…RVSVVYFYET (108 aa)) folds into the Fe2OG dioxygenase domain. Residues His212, Asp214, and His270 each contribute to the Fe cation site. Residue Arg280 coordinates 2-oxoglutarate.

This sequence belongs to the iron/ascorbate-dependent oxidoreductase family. Fe(2+) is required as a cofactor.

It is found in the cytoplasm. The protein localises to the cytosol. The catalysed reaction is L-homoarginine + 2-oxoglutarate + O2 = 6-hydroxy-L-homoarginine + succinate + CO2. In terms of biological role, 2-oxoglutarate-dependent dioxygenase catalyzing homoarginine 6-hydroxylation thus producing 6-hydroxy-L-homoarginine. Guanidine (Gd) is in turn synthesized by the spontaneous conversion of 6-hydroxy-L-homoarginine to (S)-2-amino-6-oxohexanoate (RHEA:79843); guanidine is a nitrogen-rich compound that can serve as a defense or signaling substance. The protein is Homoarginine-6-hydroxylase 2-ODD-C23 of Glycine max (Soybean).